The primary structure comprises 277 residues: Cis-3,4-dihydrophenanthrene-3,4-diol dehydrogenase (277 aa).

NAD(+) contacts are provided by residues phenylalanine 10–aspartate 37 and aspartate 60. A substrate-binding site is contributed by serine 143. The active-site Proton acceptor is tyrosine 156. Lysine 160 contacts NAD(+).

This sequence belongs to the short-chain dehydrogenases/reductases (SDR) family. As to quaternary structure, homotetramer.

The catalysed reaction is (3S,4R)-3,4-dihydrophenanthrene-3,4-diol + NAD(+) = phenanthrene-3,4-diol + NADH + H(+). Inhibited by heavy metal such as Hg(2+) and by p-chloromercuribenzoate. In terms of biological role, involved in the degradation of phenanthrene. Catalyzes the oxidation of cis-phenanthrene dihydrodiol (PDD) to yield phenanthrenediol. It can use either NAD or NADP as electron acceptor, however NAD is preferred to NADP. This is Cis-3,4-dihydrophenanthrene-3,4-diol dehydrogenase (phnB) from Alcaligenes faecalis.